A 468-amino-acid chain; its full sequence is Trehalose-2-sulfate acyltransferase PapA2 (468 aa).

The protein belongs to the PapA acyltransferase family.

It carries out the reaction 2-O-sulfo-alpha,alpha-trehalose + hexadecanoyl-CoA = 2-O-sulfo-2'-O-hexadecanoyl-alpha,alpha-trehalose + CoA. Catalyzes the acylation of trehalose-2-sulfate by adding the palmitoyl group at the 2'-position to yield the intermediate trehalose-2-sulfate-2'-palmitate (SL659). The polypeptide is Trehalose-2-sulfate acyltransferase PapA2 (papA2) (Mycobacterium tuberculosis (strain ATCC 25177 / H37Ra)).